We begin with the raw amino-acid sequence, 578 residues long: Probable arginine--tRNA ligase, mitochondrial (578 aa).

The N-terminal 16 residues, 1 to 16 (MACGFRRAIACQLSRV), are a transit peptide targeting the mitochondrion. Residues 133 to 135 (SPN), His144, Tyr322, Asp326, and Gln350 contribute to the L-arginine site. The 'HIGH' region motif lies at 133 to 144 (SPNVAKKFHVGH). Lys568 bears the N6-acetyllysine mark.

Belongs to the class-I aminoacyl-tRNA synthetase family.

The protein localises to the mitochondrion membrane. It carries out the reaction tRNA(Arg) + L-arginine + ATP = L-arginyl-tRNA(Arg) + AMP + diphosphate. Its function is as follows. Catalyzes the attachment of arginine to tRNA(Arg) in a two-step reaction: arginine is first activated by ATP to form Arg-AMP and then transferred to the acceptor end of tRNA(Arg). This Pongo abelii (Sumatran orangutan) protein is Probable arginine--tRNA ligase, mitochondrial (RARS2).